The sequence spans 80 residues: Clavanin-C (80 aa).

The first 19 residues, 1-19, serve as a signal peptide directing secretion; that stretch reads MKTTILILLILGLGINAKS. Residues 20–29 constitute a propeptide that is removed on maturation; it reads LEERKSEEEK. Phe-52 is subject to Phenylalanine amide. Residues 54–80 constitute a propeptide that is removed on maturation; it reads DDQQDNGKFYGHYAEDNGKHWYDTGDQ.

In terms of tissue distribution, hemocytes and pharyngeal tissues.

Its subcellular location is the secreted. Functionally, has antimicrobial activity against E.coli, L.monocytogenes and C.albicans. The chain is Clavanin-C from Styela clava (Sea squirt).